A 114-amino-acid polypeptide reads, in one-letter code: Photosystem II reaction center Psb28 protein (114 aa).

Belongs to the Psb28 family. In terms of assembly, part of the photosystem II complex.

The protein resides in the plastid. It localises to the chloroplast thylakoid membrane. This Gracilaria tenuistipitata var. liui (Red alga) protein is Photosystem II reaction center Psb28 protein.